We begin with the raw amino-acid sequence, 161 residues long: 2-C-methyl-D-erythritol 2,4-cyclodiphosphate synthase (161 aa).

Positions 13 and 15 each coordinate a divalent metal cation. Residues 13-15 (DAH) and 40-41 (HS) each bind 4-CDP-2-C-methyl-D-erythritol 2-phosphate. Position 48 (His48) interacts with a divalent metal cation. A 4-CDP-2-C-methyl-D-erythritol 2-phosphate-binding site is contributed by 62–64 (DIG).

This sequence belongs to the IspF family. As to quaternary structure, homotrimer. It depends on a divalent metal cation as a cofactor.

The catalysed reaction is 4-CDP-2-C-methyl-D-erythritol 2-phosphate = 2-C-methyl-D-erythritol 2,4-cyclic diphosphate + CMP. It functions in the pathway isoprenoid biosynthesis; isopentenyl diphosphate biosynthesis via DXP pathway; isopentenyl diphosphate from 1-deoxy-D-xylulose 5-phosphate: step 4/6. Involved in the biosynthesis of isopentenyl diphosphate (IPP) and dimethylallyl diphosphate (DMAPP), two major building blocks of isoprenoid compounds. Catalyzes the conversion of 4-diphosphocytidyl-2-C-methyl-D-erythritol 2-phosphate (CDP-ME2P) to 2-C-methyl-D-erythritol 2,4-cyclodiphosphate (ME-CPP) with a corresponding release of cytidine 5-monophosphate (CMP). This Deinococcus radiodurans (strain ATCC 13939 / DSM 20539 / JCM 16871 / CCUG 27074 / LMG 4051 / NBRC 15346 / NCIMB 9279 / VKM B-1422 / R1) protein is 2-C-methyl-D-erythritol 2,4-cyclodiphosphate synthase.